Reading from the N-terminus, the 461-residue chain is Ornithine decarboxylase (461 aa).

N6-(pyridoxal phosphate)lysine is present on Lys69. Pyridoxal 5'-phosphate contacts are provided by residues Ser200, Gly237, and 274–277 (EPGR). Ser303 carries the phosphoserine; by CK2 modification. A substrate-binding site is contributed by 331–332 (YD). The active-site Proton donor; shared with dimeric partner is Cys360. Cys360 is modified (S-nitrosocysteine). A substrate-binding site is contributed by Asp361. Tyr389 provides a ligand contact to pyridoxal 5'-phosphate.

This sequence belongs to the Orn/Lys/Arg decarboxylase class-II family. Homodimer. Only the dimer is catalytically active, as the active sites are constructed of residues from both monomers. Pyridoxal 5'-phosphate serves as cofactor.

It catalyses the reaction L-ornithine + H(+) = putrescine + CO2. It functions in the pathway amine and polyamine biosynthesis; putrescine biosynthesis via L-ornithine pathway; putrescine from L-ornithine: step 1/1. Inhibited by antizymes (AZs) OAZ1, OAZ2 and OAZ3 in response to polyamine levels. AZs inhibit the assembly of the functional homodimer by binding to ODC monomers. Additionally, OAZ1 targets ODC monomers for ubiquitin-independent proteolytic destruction by the 26S proteasome. Its function is as follows. Catalyzes the first and rate-limiting step of polyamine biosynthesis that converts ornithine into putrescine, which is the precursor for the polyamines, spermidine and spermine. Polyamines are essential for cell proliferation and are implicated in cellular processes, ranging from DNA replication to apoptosis. In Bos taurus (Bovine), this protein is Ornithine decarboxylase (ODC1).